The sequence spans 719 residues: Transcription factor E4F1 (719 aa).

The required for ubiquitin ligase activity stretch occupies residues 20 to 63 (NIITIQTTLGDEDEDIHKCGKCLAEFSALDAFIQHKLSRSCKRT). The segment at 59-125 (SCKRTQDPQT…SEDESSSPSK (67 aa)) is disordered. Residues 98–109 (EKQDAKVASGDK) are compositionally biased toward basic and acidic residues. The segment at 128 to 207 (WKLNTEGRYV…GLAFRESGAL (80 aa)) is mediates dimerization and DNA-binding. 2 consecutive C2H2-type zinc fingers follow at residues 136–158 (YVCDICAKTFKTTNILRTHMFTH) and 164–186 (FVCEMCETAFRTKGSLIRHKRRH). The C2H2-type 3; degenerate zinc-finger motif lies at 192-216 (YRCNQCGLAFRESGALTRHLKSLTP). C2H2-type zinc fingers lie at residues 365-387 (YKCPHCERMFKTLNYLRVHVKGH), 393-415 (FKCLTCQKEFLTGYVLKKHMETH), 421-443 (YKCGECGKQFKAIGHVREHMRAH), 449-471 (YHCSFCDKSYKTKNALQVHHRTH), and 477-499 (YVCQHCSRGFREKSALVRHIRHH). Residues 505–527 (FKCSKCGRGFAEHGTLNRHLRAK) form a C2H2-type 9; degenerate zinc finger.

It is found in the nucleus. Its subcellular location is the nucleoplasm. The protein resides in the cytoplasm. It catalyses the reaction S-ubiquitinyl-[E2 ubiquitin-conjugating enzyme]-L-cysteine + [acceptor protein]-L-lysine = [E2 ubiquitin-conjugating enzyme]-L-cysteine + N(6)-ubiquitinyl-[acceptor protein]-L-lysine.. Its pathway is protein modification; protein ubiquitination. Functionally, may function as a transcriptional repressor. May also function as a ubiquitin ligase. Functions in cell survival and proliferation through control of the cell cycle. This chain is Transcription factor E4F1 (e4f1), found in Danio rerio (Zebrafish).